The sequence spans 510 residues: Maturase K (510 aa).

Belongs to the intron maturase 2 family. MatK subfamily.

The protein resides in the plastid. It localises to the chloroplast. In terms of biological role, usually encoded in the trnK tRNA gene intron. Probably assists in splicing its own and other chloroplast group II introns. This chain is Maturase K, found in Taxus cuspidata (Japanese yew).